The following is a 101-amino-acid chain: Urease subunit beta (101 aa).

It belongs to the urease beta subunit family. Heterotrimer of UreA (gamma), UreB (beta) and UreC (alpha) subunits. Three heterotrimers associate to form the active enzyme.

Its subcellular location is the cytoplasm. The enzyme catalyses urea + 2 H2O + H(+) = hydrogencarbonate + 2 NH4(+). It functions in the pathway nitrogen metabolism; urea degradation; CO(2) and NH(3) from urea (urease route): step 1/1. The polypeptide is Urease subunit beta (Cereibacter sphaeroides (strain ATCC 17029 / ATH 2.4.9) (Rhodobacter sphaeroides)).